Here is a 526-residue protein sequence, read N- to C-terminus: GMP synthase [glutamine-hydrolyzing] (526 aa).

The 197-residue stretch at 3 to 199 folds into the Glutamine amidotransferase type-1 domain; sequence KVAIIDFGSQ…FIKIAGCKTD (197 aa). The active-site Nucleophile is C83. Active-site residues include H174 and E176. The 193-residue stretch at 200–392 folds into the GMPS ATP-PPase domain; it reads WTMNSFLDEQ…LGISDEILMR (193 aa). Residue 227–233 coordinates ATP; that stretch reads SGGVDSS.

As to quaternary structure, homodimer.

It carries out the reaction XMP + L-glutamine + ATP + H2O = GMP + L-glutamate + AMP + diphosphate + 2 H(+). Its pathway is purine metabolism; GMP biosynthesis; GMP from XMP (L-Gln route): step 1/1. In terms of biological role, catalyzes the synthesis of GMP from XMP. The polypeptide is GMP synthase [glutamine-hydrolyzing] (Ehrlichia canis (strain Jake)).